The sequence spans 317 residues: Aspartate carbamoyltransferase catalytic subunit (317 aa).

The carbamoyl phosphate site is built by R66 and T67. Position 94 (K94) interacts with L-aspartate. Residues R116, H144, and Q147 each coordinate carbamoyl phosphate. Residues R177 and R231 each coordinate L-aspartate. Residues G272 and P273 each contribute to the carbamoyl phosphate site.

This sequence belongs to the aspartate/ornithine carbamoyltransferase superfamily. ATCase family. Heterododecamer (2C3:3R2) of six catalytic PyrB chains organized as two trimers (C3), and six regulatory PyrI chains organized as three dimers (R2).

The enzyme catalyses carbamoyl phosphate + L-aspartate = N-carbamoyl-L-aspartate + phosphate + H(+). The protein operates within pyrimidine metabolism; UMP biosynthesis via de novo pathway; (S)-dihydroorotate from bicarbonate: step 2/3. Functionally, catalyzes the condensation of carbamoyl phosphate and aspartate to form carbamoyl aspartate and inorganic phosphate, the committed step in the de novo pyrimidine nucleotide biosynthesis pathway. This chain is Aspartate carbamoyltransferase catalytic subunit, found in Nitrobacter winogradskyi (strain ATCC 25391 / DSM 10237 / CIP 104748 / NCIMB 11846 / Nb-255).